The chain runs to 511 residues: 2,3-bisphosphoglycerate-independent phosphoglycerate mutase (511 aa).

Mn(2+) is bound by residues Asp14 and Ser64. Residue Ser64 is the Phosphoserine intermediate of the active site. Substrate is bound by residues His125, 155-156, Arg187, Arg193, 259-262, and Lys333; these read RD and RADR. Mn(2+)-binding residues include Asp400, His404, Asp441, His442, and His460.

It belongs to the BPG-independent phosphoglycerate mutase family. Monomer. Mn(2+) is required as a cofactor.

The catalysed reaction is (2R)-2-phosphoglycerate = (2R)-3-phosphoglycerate. It participates in carbohydrate degradation; glycolysis; pyruvate from D-glyceraldehyde 3-phosphate: step 3/5. Catalyzes the interconversion of 2-phosphoglycerate and 3-phosphoglycerate. The chain is 2,3-bisphosphoglycerate-independent phosphoglycerate mutase from Pseudomonas entomophila (strain L48).